A 362-amino-acid polypeptide reads, in one-letter code: DNA replication and repair protein RecF (362 aa).

Position 30–37 (30–37 (GDNAQGKT)) interacts with ATP.

Belongs to the RecF family.

The protein resides in the cytoplasm. Functionally, the RecF protein is involved in DNA metabolism; it is required for DNA replication and normal SOS inducibility. RecF binds preferentially to single-stranded, linear DNA. It also seems to bind ATP. The chain is DNA replication and repair protein RecF from Agathobacter rectalis (strain ATCC 33656 / DSM 3377 / JCM 17463 / KCTC 5835 / VPI 0990) (Eubacterium rectale).